The following is a 514-amino-acid chain: GTPase-activating protein gyp1 (514 aa).

Disordered regions lie at residues 17–65 (LWNG…QPPK) and 130–164 (LPRM…LHSS). Composition is skewed to polar residues over residues 18–28 (WNGSSSATSDP) and 135–158 (RSTT…TTSR). The Rab-GAP TBC domain maps to 216-443 (GIPSEHRPIV…RMWDTYMAEG (228 aa)).

The protein resides in the golgi apparatus. Its subcellular location is the golgi stack. It is found in the cytoplasm. The protein localises to the nucleus. Functionally, stimulates specifically the GTPase activity of ypt1. Functions on the Golgi as a negative regulator of ypt1. In Schizosaccharomyces pombe (strain 972 / ATCC 24843) (Fission yeast), this protein is GTPase-activating protein gyp1.